The chain runs to 411 residues: Translation initiation factor 2 subunit gamma (411 aa).

The 195-residue stretch at 9–203 (QAEVNIGMVG…AIQDFIPTPK (195 aa)) folds into the tr-type G domain. The G1 stretch occupies residues 18 to 25 (GHVDHGKT). Residues D21, T25, G46, and S48 each coordinate Mg(2+). 21 to 26 (DHGKTS) provides a ligand contact to GTP. Positions 46 to 50 (GISIR) are G2. Zn(2+) is bound by residues C61, C64, C73, and C76. The interval 90-93 (DSPG) is G3. Residues 146–149 (NKID) and 181–183 (SAH) contribute to the GTP site. The segment at 146–149 (NKID) is G4. The G5 stretch occupies residues 181-183 (SAH).

This sequence belongs to the TRAFAC class translation factor GTPase superfamily. Classic translation factor GTPase family. EIF2G subfamily. Heterotrimer composed of an alpha, a beta and a gamma chain. It depends on Mg(2+) as a cofactor.

The enzyme catalyses GTP + H2O = GDP + phosphate + H(+). EIF-2 functions in the early steps of protein synthesis by forming a ternary complex with GTP and initiator tRNA. This Methanocaldococcus jannaschii (strain ATCC 43067 / DSM 2661 / JAL-1 / JCM 10045 / NBRC 100440) (Methanococcus jannaschii) protein is Translation initiation factor 2 subunit gamma.